A 281-amino-acid polypeptide reads, in one-letter code: Putative pyruvate, phosphate dikinase regulatory protein (281 aa).

150 to 157 (GVSRTSKT) lines the ADP pocket.

It belongs to the pyruvate, phosphate/water dikinase regulatory protein family. PDRP subfamily.

It catalyses the reaction N(tele)-phospho-L-histidyl/L-threonyl-[pyruvate, phosphate dikinase] + ADP = N(tele)-phospho-L-histidyl/O-phospho-L-threonyl-[pyruvate, phosphate dikinase] + AMP + H(+). The enzyme catalyses N(tele)-phospho-L-histidyl/O-phospho-L-threonyl-[pyruvate, phosphate dikinase] + phosphate + H(+) = N(tele)-phospho-L-histidyl/L-threonyl-[pyruvate, phosphate dikinase] + diphosphate. In terms of biological role, bifunctional serine/threonine kinase and phosphorylase involved in the regulation of the pyruvate, phosphate dikinase (PPDK) by catalyzing its phosphorylation/dephosphorylation. This is Putative pyruvate, phosphate dikinase regulatory protein from Sorangium cellulosum (strain So ce56) (Polyangium cellulosum (strain So ce56)).